Reading from the N-terminus, the 86-residue chain is Small ribosomal subunit protein uS17 (86 aa).

It belongs to the universal ribosomal protein uS17 family. Part of the 30S ribosomal subunit.

Its function is as follows. One of the primary rRNA binding proteins, it binds specifically to the 5'-end of 16S ribosomal RNA. This is Small ribosomal subunit protein uS17 from Exiguobacterium sp. (strain ATCC BAA-1283 / AT1b).